The following is a 65-amino-acid chain: Large ribosomal subunit protein bL35 (65 aa).

The protein belongs to the bacterial ribosomal protein bL35 family.

The sequence is that of Large ribosomal subunit protein bL35 from Blochmanniella pennsylvanica (strain BPEN).